A 358-amino-acid chain; its full sequence is Tetraacyldisaccharide 4'-kinase (358 aa).

71 to 78 (IAGGAGKT) lines the ATP pocket.

This sequence belongs to the LpxK family.

The catalysed reaction is a lipid A disaccharide + ATP = a lipid IVA + ADP + H(+). Its pathway is glycolipid biosynthesis; lipid IV(A) biosynthesis; lipid IV(A) from (3R)-3-hydroxytetradecanoyl-[acyl-carrier-protein] and UDP-N-acetyl-alpha-D-glucosamine: step 6/6. Its function is as follows. Transfers the gamma-phosphate of ATP to the 4'-position of a tetraacyldisaccharide 1-phosphate intermediate (termed DS-1-P) to form tetraacyldisaccharide 1,4'-bis-phosphate (lipid IVA). The chain is Tetraacyldisaccharide 4'-kinase from Methylibium petroleiphilum (strain ATCC BAA-1232 / LMG 22953 / PM1).